The primary structure comprises 89 residues: Nucleoside triphosphatase I (89 aa).

Positions 42 to 89 (FLGLDKMHSLLLFHDTGVGKTITTTFIIKQLKNIYTNWSILLLVKKHL) constitute a Helicase ATP-binding domain. 55-62 (HDTGVGKT) provides a ligand contact to ATP.

It belongs to the helicase family. NPH I subfamily.

It carries out the reaction a ribonucleoside 5'-triphosphate + H2O = a ribonucleoside 5'-diphosphate + phosphate + H(+). Serves two roles in transcription; it acts in concert with viral termination factor/capping enzyme to catalyze release of UUUUUNU-containing nascent RNA from the elongation complex, and it acts by itself as a polymerase elongation factor to facilitate readthrough of intrinsic pause sites. This Swinepox virus (strain Kasza) (SWPV) protein is Nucleoside triphosphatase I (NPH1).